A 984-amino-acid polypeptide reads, in one-letter code: uncharacterized protein (984 aa).

The interval 941-984 (FGPSGPGPNQGPGDDYNNFKSTKYPRNGYNKYQPNNRIHSRNRY) is disordered.

Its subcellular location is the virion. This is an uncharacterized protein from Acanthamoeba polyphaga (Amoeba).